The following is a 200-amino-acid chain: Protein GrpE (200 aa).

Acidic residues-rich tracts occupy residues 1-17 (MNEQ…EQFD) and 34-44 (AFAEAGEETRD). The tract at residues 1–49 (MNEQPNEELQSEDEQFDPQETVSFEGETAANDEAFAEAGEETRDEEMTR) is disordered.

It belongs to the GrpE family. As to quaternary structure, homodimer.

The protein resides in the cytoplasm. In terms of biological role, participates actively in the response to hyperosmotic and heat shock by preventing the aggregation of stress-denatured proteins, in association with DnaK and GrpE. It is the nucleotide exchange factor for DnaK and may function as a thermosensor. Unfolded proteins bind initially to DnaJ; upon interaction with the DnaJ-bound protein, DnaK hydrolyzes its bound ATP, resulting in the formation of a stable complex. GrpE releases ADP from DnaK; ATP binding to DnaK triggers the release of the substrate protein, thus completing the reaction cycle. Several rounds of ATP-dependent interactions between DnaJ, DnaK and GrpE are required for fully efficient folding. The chain is Protein GrpE from Rhodopirellula baltica (strain DSM 10527 / NCIMB 13988 / SH1).